Here is a 221-residue protein sequence, read N- to C-terminus: Small ribosomal subunit protein uS5 (221 aa).

One can recognise an S5 DRBM domain in the interval 46–109 (IKDEVIDIKR…INAKLNIMEI (64 aa)).

This sequence belongs to the universal ribosomal protein uS5 family. Part of the 30S ribosomal subunit. Contacts protein S4.

Functionally, with S4 and S12 plays an important role in translational accuracy. The protein is Small ribosomal subunit protein uS5 of Thermoplasma volcanium (strain ATCC 51530 / DSM 4299 / JCM 9571 / NBRC 15438 / GSS1).